We begin with the raw amino-acid sequence, 480 residues long: Membrane-bound lytic murein transglycosylase F (480 aa).

The N-terminal stretch at 1-15 (MKKLLFVLLTITLLA) is a signal peptide. Residues 16-259 (SCQKVSVEQT…HLNEKYFAHV (244 aa)) are non-LT domain. The LT domain stretch occupies residues 260–480 (KRFDYVDTRA…QENLSGAQPQ (221 aa)). Glutamate 304 is a catalytic residue.

It in the N-terminal section; belongs to the bacterial solute-binding protein 3 family. The protein in the C-terminal section; belongs to the transglycosylase Slt family.

The protein localises to the cell outer membrane. It carries out the reaction Exolytic cleavage of the (1-&gt;4)-beta-glycosidic linkage between N-acetylmuramic acid (MurNAc) and N-acetylglucosamine (GlcNAc) residues in peptidoglycan, from either the reducing or the non-reducing ends of the peptidoglycan chains, with concomitant formation of a 1,6-anhydrobond in the MurNAc residue.. Functionally, murein-degrading enzyme that degrades murein glycan strands and insoluble, high-molecular weight murein sacculi, with the concomitant formation of a 1,6-anhydromuramoyl product. Lytic transglycosylases (LTs) play an integral role in the metabolism of the peptidoglycan (PG) sacculus. Their lytic action creates space within the PG sacculus to allow for its expansion as well as for the insertion of various structures such as secretion systems and flagella. In Shewanella sediminis (strain HAW-EB3), this protein is Membrane-bound lytic murein transglycosylase F.